Here is a 268-residue protein sequence, read N- to C-terminus: 5'-nucleotidase SurE (268 aa).

Positions 24, 25, 55, and 111 each coordinate a divalent metal cation.

It belongs to the SurE nucleotidase family. A divalent metal cation is required as a cofactor.

It localises to the cytoplasm. It catalyses the reaction a ribonucleoside 5'-phosphate + H2O = a ribonucleoside + phosphate. Functionally, nucleotidase that shows phosphatase activity on nucleoside 5'-monophosphates. This chain is 5'-nucleotidase SurE, found in Deinococcus radiodurans (strain ATCC 13939 / DSM 20539 / JCM 16871 / CCUG 27074 / LMG 4051 / NBRC 15346 / NCIMB 9279 / VKM B-1422 / R1).